The chain runs to 271 residues: Pyrroline-5-carboxylate reductase (271 aa).

The protein belongs to the pyrroline-5-carboxylate reductase family.

Its subcellular location is the cytoplasm. It catalyses the reaction L-proline + NADP(+) = (S)-1-pyrroline-5-carboxylate + NADPH + 2 H(+). The enzyme catalyses L-proline + NAD(+) = (S)-1-pyrroline-5-carboxylate + NADH + 2 H(+). It functions in the pathway amino-acid biosynthesis; L-proline biosynthesis; L-proline from L-glutamate 5-semialdehyde: step 1/1. Its function is as follows. Catalyzes the reduction of 1-pyrroline-5-carboxylate (PCA) to L-proline. This is Pyrroline-5-carboxylate reductase from Staphylococcus aureus (strain COL).